We begin with the raw amino-acid sequence, 361 residues long: MISNYDITDSKSSSKVLRPPGGGSSDIFGSDMPQTPRNVKNRMVSNIFSVEKDNSVKNTVRQGAHRFYFIGDNPRRGQKPVDSHSRLFGEPMRPITPGKNHMKSSIPFGQNTETAAAAQKLLTNGSSTANTTNGHQYNGKSGSVSSASSSVSSSTENLKMNSGSRSVYIRNMSNNEKSKQTKTDTAGCPLTPVASAAAPPPADVLGIDLPCLDLEVGDVPKDNEIYTETGKHDVNIQTRRDSGSNVEQPHSLEKMRSTANLKEPLALCPDYVKEVHGPCNARNPITGLGLNGDGVGGLKPVKQKIREGNPVTGEGYRAGGTDYIKAAGSTNSGSVGNGDNGGNSVVNKNRVPPGGYSSGLW.

The span at 1–15 (MISNYDITDSKSSSK) shows a compositional bias: polar residues. Disordered regions lie at residues 1-38 (MISN…TPRN) and 70-99 (IGDN…TPGK). Serine 24 carries the phosphoserine modification. Phosphothreonine is present on threonine 35. The span at 73-87 (NPRRGQKPVDSHSRL) shows a compositional bias: basic and acidic residues. Threonine 96 bears the Phosphothreonine mark. A Phosphoserine modification is found at serine 105. 2 stretches are compositionally biased toward low complexity: residues 125–134 (GSSTANTTNG) and 141–154 (SGSV…VSSS). Disordered stretches follow at residues 125–165 (GSST…SGSR) and 328–361 (GSTN…SGLW). Phosphoserine is present on residues serine 143 and serine 154. Residues 155-165 (TENLKMNSGSR) are compositionally biased toward polar residues.

The protein belongs to the MAP Jupiter family.

It is found in the nucleus. Its subcellular location is the cytoplasm. It localises to the cytoskeleton. The protein resides in the spindle. Binds to all microtubule populations. This is Microtubule-associated protein Jupiter from Drosophila persimilis (Fruit fly).